The chain runs to 65 residues: Small ribosomal subunit protein bS21 (65 aa).

Residues 43–52 (EKKRVKEALA) are compositionally biased toward basic and acidic residues. The tract at residues 43–65 (EKKRVKEALARKRSRKKARKEQD) is disordered. The span at 53–65 (RKRSRKKARKEQD) shows a compositional bias: basic residues.

It belongs to the bacterial ribosomal protein bS21 family.

This is Small ribosomal subunit protein bS21 from Koribacter versatilis (strain Ellin345).